A 178-amino-acid polypeptide reads, in one-letter code: Napin-B (178 aa).

Positions 1-21 (MANKLFLVSATLAFFFLLTNA) are cleaved as a signal peptide. Propeptides lie at residues 22–38 (SIYR…ATNP) and 75–94 (PSWT…NPQG).

It belongs to the 2S seed storage albumins family. In terms of assembly, the mature protein consists of a small and a large chain linked by disulfide bonds. Cotyledons and the axis.

Functionally, the small, basic, water-soluble napins are one of the two major kinds of storage proteins synthesized in the seed during its maturation. The sequence is that of Napin-B (NAPB) from Brassica napus (Rape).